We begin with the raw amino-acid sequence, 757 residues long: MDVNPTLLFLKVPVQNAISTTFPYTGDPPYSHGTGTGYTMDTVNRTHQYSEKGKWTTNTETGAPQLNPIDGPLPEDNEPSGYAQTDCVLEAMAFLENSHPGIFENSCLETMEIVQQTRVDKLTQGRQTYDWTLNRNQPAATALANTIEIFRSNGLTANESGRLIDFLKDVMESMDKEEMEITTHFHRKRRVRDNMTKKMVTQRTIGKKKQRLNKKSYLIRALTLNTMTKDAERGKLKRRAIATPGMQIRGFVYFVETLARSICEKLEQSGLPVGGNEKKAKLANVVRKMMTNSQDTELSFTITGDNTKWNENQNPRMFLAMITYITRNQPEWFRNVLSIAPIMFSNKMARLGKGYMFESKSMKLRTQIPAEMLANIDLKYFNELTKKKIEKIRPLLIDGTASLSPGMMMGMFNMLSTVLGVSILNLGQKRYTKTTYWWDGLQSSDDFALIVNAPNHEGIQAGVDRFYRTCKLVGINMSKKKSYINRTGTFEFTSFFYRYGFVANFSMELPSFGVSGINESADMSIGVTVIKNNMINNDLGPATAQMALQLFIKDYRYTYRCHRGDTQIQTRRSFELKKLWEQTRSKAGLLVSDGGPNLYNIRNLHIPEVCLKWELMDEDYQGRLCNPLNPFVSHKEIESVNNAVVMPAHGPAKSMEYDAVATTHSWIPKRNRSILNTSQRGILEDEQMYQKCCNLFEKFFPSSSYRRPVGISSMVEAMVSRARIDARIDFESGRIKKEEFAEIMKICSTIEELRRQK.

Positions 52–82 are disordered; that stretch reads KGKWTTNTETGAPQLNPIDGPLPEDNEPSGY. The segment covering 55–64 has biased composition (polar residues); sequence WTTNTETGAP. 2 consecutive short sequence motifs (nuclear localization signal) follow at residues 187–195 and 203–216; these read RKRRVRDNM and RTIGKKKQRLNKKS. Residues 249 to 256 are promoter-binding site; sequence RGFVYFVE. The region spanning 286-483 is the RdRp catalytic domain; that stretch reads VRKMMTNSQD…GINMSKKKSY (198 aa).

Belongs to the influenza viruses polymerase PB1 family. As to quaternary structure, influenza RNA polymerase is composed of three subunits: PB1, PB2 and PA. Interacts (via N-terminus) with PA (via C-terminus). Interacts (via C-terminus) with PB2 (via N-terminus); this interaction is essential for transcription initiation. Phosphorylated by host PRKCA.

The protein resides in the host nucleus. The protein localises to the host cytoplasm. The catalysed reaction is RNA(n) + a ribonucleoside 5'-triphosphate = RNA(n+1) + diphosphate. Functionally, RNA-dependent RNA polymerase which is responsible for replication and transcription of virus RNA segments. The transcription of viral mRNAs occurs by a unique mechanism called cap-snatching. 5' methylated caps of cellular mRNAs are cleaved after 10-13 nucleotides by PA. In turn, these short capped RNAs are used as primers by PB1 for transcription of viral mRNAs. During virus replication, PB1 initiates RNA synthesis and copy vRNA into complementary RNA (cRNA) which in turn serves as a template for the production of more vRNAs. This Aves (Cat) protein is RNA-directed RNA polymerase catalytic subunit.